The primary structure comprises 311 residues: Ketoisovalerate oxidoreductase subunit VorB (311 aa).

Heterotetramer of one alpha, one beta, one delta and one gamma chain.

The enzyme catalyses 3-methyl-2-oxobutanoate + 2 oxidized [2Fe-2S]-[ferredoxin] + CoA = 2-methylpropanoyl-CoA + 2 reduced [2Fe-2S]-[ferredoxin] + CO2 + H(+). The protein is Ketoisovalerate oxidoreductase subunit VorB (vorB) of Pyrococcus abyssi (strain GE5 / Orsay).